The primary structure comprises 161 residues: 2-C-methyl-D-erythritol 2,4-cyclodiphosphate synthase (161 aa).

Residues Asp-11 and His-13 each contribute to the a divalent metal cation site. 4-CDP-2-C-methyl-D-erythritol 2-phosphate is bound by residues 11–13 and 37–38; these read DIH and HS. His-45 provides a ligand contact to a divalent metal cation. Residues 59-61, 135-138, and Arg-145 each bind 4-CDP-2-C-methyl-D-erythritol 2-phosphate; these read DIG and TTNE.

This sequence belongs to the IspF family. Homotrimer. A divalent metal cation serves as cofactor.

The enzyme catalyses 4-CDP-2-C-methyl-D-erythritol 2-phosphate = 2-C-methyl-D-erythritol 2,4-cyclic diphosphate + CMP. It functions in the pathway isoprenoid biosynthesis; isopentenyl diphosphate biosynthesis via DXP pathway; isopentenyl diphosphate from 1-deoxy-D-xylulose 5-phosphate: step 4/6. Involved in the biosynthesis of isopentenyl diphosphate (IPP) and dimethylallyl diphosphate (DMAPP), two major building blocks of isoprenoid compounds. Catalyzes the conversion of 4-diphosphocytidyl-2-C-methyl-D-erythritol 2-phosphate (CDP-ME2P) to 2-C-methyl-D-erythritol 2,4-cyclodiphosphate (ME-CPP) with a corresponding release of cytidine 5-monophosphate (CMP). In Cyanothece sp. (strain PCC 7425 / ATCC 29141), this protein is 2-C-methyl-D-erythritol 2,4-cyclodiphosphate synthase.